The following is a 224-amino-acid chain: Urease accessory protein UreF (224 aa).

This sequence belongs to the UreF family. UreD, UreF and UreG form a complex that acts as a GTP-hydrolysis-dependent molecular chaperone, activating the urease apoprotein by helping to assemble the nickel containing metallocenter of UreC. The UreE protein probably delivers the nickel.

It localises to the cytoplasm. Functionally, required for maturation of urease via the functional incorporation of the urease nickel metallocenter. This chain is Urease accessory protein UreF, found in Pseudomonas savastanoi pv. phaseolicola (strain 1448A / Race 6) (Pseudomonas syringae pv. phaseolicola (strain 1448A / Race 6)).